The following is a 311-amino-acid chain: Replication initiation protein (311 aa).

This sequence belongs to the plasmid replication initiation factor family.

Its function is as follows. This protein is probably a specific topoisomerase involved in initiating replication. This protein is specifically required and may be rate-limiting for replication of the plasmid in vivo. This Staphylococcus aureus protein is Replication initiation protein (repD).